The primary structure comprises 480 residues: Sensor histidine kinase CusS (480 aa).

Residues 1 to 15 are Cytoplasmic-facing; sequence MVSKPFQRPFSLATR. The helical transmembrane segment at 16 to 36 threads the bilayer; that stretch reads LTFFISLATIAAFFAFAWIMI. Residues 37-186 lie on the Periplasmic side of the membrane; that stretch reads HSVKVHFAEQ…LHYINDLMNK (150 aa). The chain crosses the membrane as a helical span at residues 187-207; sequence LIMTASVISILIVFIVLLAVH. The HAMP domain occupies 208–260; the sequence is KGHAPIRSVSRQIQNITSKDLDVRLDPQTVPIELEQLVLSFNHMIERIEDVFT. Over 208–480 the chain is Cytoplasmic; it reads KGHAPIRSVS…GTRFVITLPA (273 aa). A Histidine kinase domain is found at 268-480; that stretch reads DIAHEIRTPI…GTRFVITLPA (213 aa). His-271 bears the Phosphohistidine; by autocatalysis mark.

Autophosphorylated.

It is found in the cell inner membrane. It catalyses the reaction ATP + protein L-histidine = ADP + protein N-phospho-L-histidine.. In terms of biological role, member of the two-component regulatory system CusS/CusR involved in response to copper and silver. Acts as a copper/silver ion sensor. Activates CusR by phosphorylation. This is Sensor histidine kinase CusS (cusS) from Escherichia coli (strain K12).